Here is a 158-residue protein sequence, read N- to C-terminus: Serine-protein kinase RsbW (158 aa).

This sequence belongs to the anti-sigma-factor family.

The catalysed reaction is L-seryl-[protein] + ATP = O-phospho-L-seryl-[protein] + ADP + H(+). The enzyme catalyses L-threonyl-[protein] + ATP = O-phospho-L-threonyl-[protein] + ADP + H(+). Its function is as follows. Negative regulator of sigma-B activity. Phosphorylates and inactivates its specific antagonist protein, RsbV. Upon phosphorylation of RsbV, RsbW is released and binds to sigma-B, thereby blocking its ability to form an RNA polymerase holoenzyme (E-sigma-B). The chain is Serine-protein kinase RsbW from Oceanobacillus iheyensis (strain DSM 14371 / CIP 107618 / JCM 11309 / KCTC 3954 / HTE831).